The primary structure comprises 217 residues: Peptide methionine sulfoxide reductase MsrA (217 aa).

The active site involves C56.

It belongs to the MsrA Met sulfoxide reductase family.

The enzyme catalyses L-methionyl-[protein] + [thioredoxin]-disulfide + H2O = L-methionyl-(S)-S-oxide-[protein] + [thioredoxin]-dithiol. It catalyses the reaction [thioredoxin]-disulfide + L-methionine + H2O = L-methionine (S)-S-oxide + [thioredoxin]-dithiol. Its function is as follows. Has an important function as a repair enzyme for proteins that have been inactivated by oxidation. Catalyzes the reversible oxidation-reduction of methionine sulfoxide in proteins to methionine. This Corynebacterium glutamicum (strain ATCC 13032 / DSM 20300 / JCM 1318 / BCRC 11384 / CCUG 27702 / LMG 3730 / NBRC 12168 / NCIMB 10025 / NRRL B-2784 / 534) protein is Peptide methionine sulfoxide reductase MsrA.